Here is a 266-residue protein sequence, read N- to C-terminus: Eukaryotic translation initiation factor 3 subunit J (266 aa).

2 disordered regions span residues 1–142 (MAPS…VSDS) and 215–243 (MSNE…VSLV). Positions 26 to 44 (DEEEEDVLDSWDAAEDSEV) are enriched in acidic residues. Residues 40–99 (EDSEVEREKAAKAAEAKAKAEAEAAAKKKSKAQRIQEHKEERKKREEEDSSSESEEDEAE) adopt a coiled-coil conformation. Basic and acidic residues-rich tracts occupy residues 45–65 (EREK…EAAA) and 73–86 (RIQE…KREE). Acidic residues predominate over residues 87-97 (EDSSSESEEDE). Basic and acidic residues-rich tracts occupy residues 98–118 (AERR…HAED) and 218–230 (EKMR…DKGN).

It belongs to the eIF-3 subunit J family. As to quaternary structure, component of the eukaryotic translation initiation factor 3 (eIF-3) complex.

The protein localises to the cytoplasm. In terms of biological role, component of the eukaryotic translation initiation factor 3 (eIF-3) complex, which is involved in protein synthesis of a specialized repertoire of mRNAs and, together with other initiation factors, stimulates binding of mRNA and methionyl-tRNAi to the 40S ribosome. The eIF-3 complex specifically targets and initiates translation of a subset of mRNAs involved in cell proliferation. The protein is Eukaryotic translation initiation factor 3 subunit J (hcr1) of Aspergillus terreus (strain NIH 2624 / FGSC A1156).